A 513-amino-acid polypeptide reads, in one-letter code: MGHSVAGVCLEEPAVLTAFPSLLHPQDPPQQRDRILFVTAELSDFVKVGGLGDFSAALPRVLRRQHAVRVLLPGYRQVLERCSDLRILGSLPGRAAIPPCEIGLVTLDDGLEVMLVLCPLLYEREGTPYMDDQGNDWADNHLRFARLCLAAAEIAGGHGAQGWQPGLVHANDWPSALTPAYMAWNGVRTPSLFTIHNLAYQGLCDLQCSAELGLPDEALSPESMEFHGRLSFLKAGIAHAHHITTVSETYAQEITTPEYGCGLHGILKCKVEKRQLSGIVNGIDDSWQPHCDPHLVAGFSARQWAGKRANTRYVEERFGLEPGKGPLFAVVSRLVQQKGIDLTLEISDALLQAGGRLVSIGRGEPSLEKAMLDLSRRHPGQVGVHIGFDETDARRIYAGSDFLLMPSRYEPCGLSQLYAQCFGSLPIARCTGGLADTIVDGVTGFLFREETAQSYLDAVLRAINVYHCPALLNAMRCKAMAAPMFWRDSVEPYNRLYRRLLRNTAPAWRGVRP.

K47 contacts ADP-alpha-D-glucose.

It belongs to the glycosyltransferase 1 family. Bacterial/plant glycogen synthase subfamily.

It carries out the reaction [(1-&gt;4)-alpha-D-glucosyl](n) + ADP-alpha-D-glucose = [(1-&gt;4)-alpha-D-glucosyl](n+1) + ADP + H(+). The protein operates within glycan biosynthesis; glycogen biosynthesis. Functionally, synthesizes alpha-1,4-glucan chains using ADP-glucose. The polypeptide is Glycogen synthase (Pseudomonas paraeruginosa (strain DSM 24068 / PA7) (Pseudomonas aeruginosa (strain PA7))).